A 79-amino-acid chain; its full sequence is Small ribosomal subunit protein bS18 (79 aa).

Belongs to the bacterial ribosomal protein bS18 family. In terms of assembly, part of the 30S ribosomal subunit. Forms a tight heterodimer with protein bS6.

In terms of biological role, binds as a heterodimer with protein bS6 to the central domain of the 16S rRNA, where it helps stabilize the platform of the 30S subunit. The sequence is that of Small ribosomal subunit protein bS18 from Aster yellows witches'-broom phytoplasma (strain AYWB).